We begin with the raw amino-acid sequence, 115 residues long: UPF0295 protein BPUM_0828 (115 aa).

Helical transmembrane passes span 13–33 (TFAL…VFFK) and 41–61 (FFML…FWIG).

Belongs to the UPF0295 family.

Its subcellular location is the cell membrane. This chain is UPF0295 protein BPUM_0828, found in Bacillus pumilus (strain SAFR-032).